The following is a 183-amino-acid chain: Capsid protein (183 aa).

The interval Asn-136 to Cys-183 is disordered. Basic residues predominate over residues Val-149–Ser-176. Phosphoserine; by host occurs at positions 155, 162, and 170. A 1; half-length repeat occupies Ser-155–Pro-161. Residues Ser-155–Gln-177 form a 3 X 8 AA repeats of S-P-R-R-R-[PR]-S-Q region. A Bipartite nuclear localization signal motif is present at residues Arg-158–Arg-175. Tandem repeats lie at residues Ser-162–Gln-169 and Ser-170–Gln-177. Residues Gln-177–Cys-183 are RNA binding.

It belongs to the orthohepadnavirus core antigen family. As to quaternary structure, homodimerizes, then multimerizes. Interacts with cytosol exposed regions of viral L glycoprotein present in the reticulum-to-Golgi compartment. Interacts with human FLNB. Phosphorylated form interacts with host importin alpha; this interaction depends on the exposure of the NLS, which itself depends upon genome maturation and/or phosphorylation of the capsid protein. Interacts with host NUP153. Post-translationally, phosphorylated by host SRPK1, SRPK2, and maybe protein kinase C or GAPDH. Phosphorylation is critical for pregenomic RNA packaging. Protein kinase C phosphorylation is stimulated by HBx protein and may play a role in transport of the viral genome to the nucleus at the late step during the viral replication cycle.

It is found in the virion. It localises to the host cytoplasm. In terms of biological role, self assembles to form an icosahedral capsid. Most capsids appear to be large particles with an icosahedral symmetry of T=4 and consist of 240 copies of capsid protein, though a fraction forms smaller T=3 particles consisting of 180 capsid proteins. Entering capsids are transported along microtubules to the nucleus. Phosphorylation of the capsid is thought to induce exposure of nuclear localization signal in the C-terminal portion of the capsid protein that allows binding to the nuclear pore complex via the importin (karyopherin-) alpha and beta. Capsids are imported in intact form through the nuclear pore into the nuclear basket, where it probably binds NUP153. Only capsids that contain the mature viral genome can release the viral DNA and capsid protein into the nucleoplasm. Immature capsids get stuck in the basket. Capsids encapsulate the pre-genomic RNA and the P protein. Pre-genomic RNA is reverse-transcribed into DNA while the capsid is still in the cytoplasm. The capsid can then either be directed to the nucleus, providing more genomes for transcription, or bud through the endoplasmic reticulum to provide new virions. This is Capsid protein from Homo sapiens (Human).